The chain runs to 133 residues: Large ribosomal subunit protein bL17 (133 aa).

This sequence belongs to the bacterial ribosomal protein bL17 family. As to quaternary structure, part of the 50S ribosomal subunit. Contacts protein L32.

In Nitratidesulfovibrio vulgaris (strain ATCC 29579 / DSM 644 / CCUG 34227 / NCIMB 8303 / VKM B-1760 / Hildenborough) (Desulfovibrio vulgaris), this protein is Large ribosomal subunit protein bL17.